Here is a 202-residue protein sequence, read N- to C-terminus: MDIEKIYKESGALLKGHFLLSSGKHSPNYLQSAKVLEDPKKAELLAKELAKQIQAAGIEVDTVCSPAIGGLLAGYELARALGVRFIFTERKDGKMTLRRGFEVEPGEKVLICEDIITTGGSAMEAAKEMEKRGAEVVAFAALANRGVCQRTGSEIPSKSECKLPSNKTLFALADFTFPIYEPKECPMCAEGSEPIKPGSRGN.

A 5-phospho-alpha-D-ribose 1-diphosphate-binding site is contributed by 113–121; sequence EDIITTGGS. The orotate site is built by Thr117 and Arg145.

The protein belongs to the purine/pyrimidine phosphoribosyltransferase family. PyrE subfamily. As to quaternary structure, homodimer. Mg(2+) is required as a cofactor.

The enzyme catalyses orotidine 5'-phosphate + diphosphate = orotate + 5-phospho-alpha-D-ribose 1-diphosphate. It participates in pyrimidine metabolism; UMP biosynthesis via de novo pathway; UMP from orotate: step 1/2. In terms of biological role, catalyzes the transfer of a ribosyl phosphate group from 5-phosphoribose 1-diphosphate to orotate, leading to the formation of orotidine monophosphate (OMP). The protein is Orotate phosphoribosyltransferase of Nitratiruptor sp. (strain SB155-2).